The chain runs to 720 residues: Polyribonucleotide nucleotidyltransferase (720 aa).

Mg(2+) is bound by residues aspartate 487 and aspartate 493. The KH domain occupies 554–613 (PRIETFKIPTDKIREVIGTGGKVIREIVEKTGAKVNIEDDGTVKVASSDGEAMKAAIKWI). An S1 motif domain is found at 623–691 (GQIYDGTVVK…DRGKTRLSMK (69 aa)). The tract at residues 692 to 720 (AVDQTTGEDLEAKQKAEGGAEAPREAAGE) is disordered. Residues 701–720 (LEAKQKAEGGAEAPREAAGE) show a composition bias toward basic and acidic residues.

This sequence belongs to the polyribonucleotide nucleotidyltransferase family. Mg(2+) serves as cofactor.

It is found in the cytoplasm. It catalyses the reaction RNA(n+1) + phosphate = RNA(n) + a ribonucleoside 5'-diphosphate. In terms of biological role, involved in mRNA degradation. Catalyzes the phosphorolysis of single-stranded polyribonucleotides processively in the 3'- to 5'-direction. The polypeptide is Polyribonucleotide nucleotidyltransferase (Bradyrhizobium sp. (strain BTAi1 / ATCC BAA-1182)).